The chain runs to 118 residues: uncharacterized protein (118 aa).

It localises to the mitochondrion. This is an uncharacterized protein from Arabidopsis thaliana (Mouse-ear cress).